The primary structure comprises 274 residues: MQFAKMHGLGNDFMVVDAVTQNVYFSPELIRRLADRHTGVGFDQLLVVEPPYDPDLDFHYRIFNADGSEVAQCGNGARCFARFVRIKGLTNRRDIRVSTQNSRMTLHVGEDDRVTVNMGEPQFEPGRIPFKAAKAEKTYILRVAQQTVLCGAVSMGNPHCVLQVEDISRAQVELLGPSLESHERFPERVNVGFMQVVERSHIRLRVYERGAGETQACGSGACAAVAVGIQQGLLDEQVQVDLPGGTLHIRWPGPGTPLLMTGPAAHVYDGFIHL.

Positions 11, 44, and 64 each coordinate substrate. Catalysis depends on Cys73, which acts as the Proton donor. Residues 74–75, Asn157, Asn190, and 208–209 each bind substrate; these read GN and ER. The active-site Proton acceptor is the Cys217. A substrate-binding site is contributed by 218-219; the sequence is GS.

Belongs to the diaminopimelate epimerase family. Homodimer.

The protein localises to the cytoplasm. It catalyses the reaction (2S,6S)-2,6-diaminopimelate = meso-2,6-diaminopimelate. It functions in the pathway amino-acid biosynthesis; L-lysine biosynthesis via DAP pathway; DL-2,6-diaminopimelate from LL-2,6-diaminopimelate: step 1/1. Catalyzes the stereoinversion of LL-2,6-diaminopimelate (L,L-DAP) to meso-diaminopimelate (meso-DAP), a precursor of L-lysine and an essential component of the bacterial peptidoglycan. The protein is Diaminopimelate epimerase of Edwardsiella ictaluri (strain 93-146).